The following is a 503-amino-acid chain: Glycosyltransferase family 92 protein ZK381.2 (503 aa).

The chain crosses the membrane as a helical span at residues 7–27 (YKPCLLIILIFNSVILLFILI). In terms of domain architecture, GT92 spans 156–441 (KPVIICISPQ…FKCYFDSFYK (286 aa)).

The protein belongs to the glycosyltransferase 92 family.

It is found in the membrane. The sequence is that of Glycosyltransferase family 92 protein ZK381.2 from Caenorhabditis elegans.